The sequence spans 485 residues: Ribulose bisphosphate carboxylase large chain (485 aa).

A propeptide spanning residues 1–2 is cleaved from the precursor; it reads MS. Pro-3 carries the N-acetylproline modification. The residue at position 14 (Lys-14) is an N6,N6,N6-trimethyllysine. Asn-123 and Thr-173 together coordinate substrate. The active-site Proton acceptor is the Lys-175. Lys-177 is a substrate binding site. Residues Lys-201, Asp-203, and Glu-204 each contribute to the Mg(2+) site. An N6-carboxylysine modification is found at Lys-201. The active-site Proton acceptor is the His-294. Positions 295, 327, and 379 each coordinate substrate.

This sequence belongs to the RuBisCO large chain family. Type I subfamily. As to quaternary structure, heterohexadecamer of 8 large chains and 8 small chains; disulfide-linked. The disulfide link is formed within the large subunit homodimers. Mg(2+) is required as a cofactor. The disulfide bond which can form in the large chain dimeric partners within the hexadecamer appears to be associated with oxidative stress and protein turnover.

The protein localises to the plastid. Its subcellular location is the chloroplast. The enzyme catalyses 2 (2R)-3-phosphoglycerate + 2 H(+) = D-ribulose 1,5-bisphosphate + CO2 + H2O. It catalyses the reaction D-ribulose 1,5-bisphosphate + O2 = 2-phosphoglycolate + (2R)-3-phosphoglycerate + 2 H(+). Functionally, ruBisCO catalyzes two reactions: the carboxylation of D-ribulose 1,5-bisphosphate, the primary event in carbon dioxide fixation, as well as the oxidative fragmentation of the pentose substrate in the photorespiration process. Both reactions occur simultaneously and in competition at the same active site. The polypeptide is Ribulose bisphosphate carboxylase large chain (Flaveria bidentis (Coastal plain yellowtops)).